We begin with the raw amino-acid sequence, 164 residues long: Vesiculogenesis and immune response regulator (164 aa).

Post-translationally, could be O-mannosylated. Is likely mannosylated on Thr-61 when overexpressed in M.smegmatis.

It is found in the cell inner membrane. The protein localises to the cytoplasm. Its function is as follows. Virulence factor that regulates vesiculogenesis. Acts by regulating the production of mycobacterial membrane vesicles (MV) bearing Toll-like receptor 2 (TLR2) ligands, including the lipoproteins LpqH, a major host TLR2 agonist, and SodC. By restraining the release of most of the material that activates host cells through TLR2, VirR reduces the immunostimulant potential of M.tuberculosis and increases its virulence. May contribute to cell envelope integrity. In terms of biological role, when overexpressed in M.smegmatis, it modulates the production of IL-10, IL-12 p40 and TNF-alpha by RAW264.7 macrophages and it decreases the killing of M.smegmatis. The sequence is that of Vesiculogenesis and immune response regulator from Mycobacterium tuberculosis (strain ATCC 25618 / H37Rv).